A 681-amino-acid polypeptide reads, in one-letter code: Methionine--tRNA ligase (681 aa).

The short motif at 14–24 (PYANGSIHLGH) is the 'HIGH' region element. The Zn(2+) site is built by cysteine 145, cysteine 148, cysteine 158, and cysteine 161. The short motif at 331–335 (KMSKS) is the 'KMSKS' region element. Lysine 334 lines the ATP pocket. A tRNA-binding domain is found at 579–681 (AFAAVDLRIA…AGAKPGQRVH (103 aa)).

Belongs to the class-I aminoacyl-tRNA synthetase family. MetG type 1 subfamily. As to quaternary structure, homodimer. Zn(2+) serves as cofactor.

It localises to the cytoplasm. The enzyme catalyses tRNA(Met) + L-methionine + ATP = L-methionyl-tRNA(Met) + AMP + diphosphate. Functionally, is required not only for elongation of protein synthesis but also for the initiation of all mRNA translation through initiator tRNA(fMet) aminoacylation. The sequence is that of Methionine--tRNA ligase from Azotobacter vinelandii (strain DJ / ATCC BAA-1303).